A 191-amino-acid polypeptide reads, in one-letter code: Adenylate kinase (191 aa).

Glycine 12 to threonine 17 is a binding site for ATP. The NMP stretch occupies residues serine 33 to valine 62. Residues threonine 34, arginine 39, asparagine 60–valine 62, glycine 87–arginine 90, and glutamine 94 contribute to the AMP site. Residues glycine 129–aspartate 135 form an LID region. Arginine 130 is a binding site for ATP. AMP is bound by residues arginine 132 and arginine 144. Position 172 (arginine 172) interacts with ATP.

Belongs to the adenylate kinase family. In terms of assembly, monomer.

It is found in the cytoplasm. It catalyses the reaction AMP + ATP = 2 ADP. It participates in purine metabolism; AMP biosynthesis via salvage pathway; AMP from ADP: step 1/1. Catalyzes the reversible transfer of the terminal phosphate group between ATP and AMP. Plays an important role in cellular energy homeostasis and in adenine nucleotide metabolism. The protein is Adenylate kinase of Campylobacter fetus subsp. fetus (strain 82-40).